A 469-amino-acid polypeptide reads, in one-letter code: 3-isopropylmalate dehydratase large subunit (469 aa).

[4Fe-4S] cluster is bound by residues C350, C410, and C413.

Belongs to the aconitase/IPM isomerase family. LeuC type 1 subfamily. As to quaternary structure, heterodimer of LeuC and LeuD. Requires [4Fe-4S] cluster as cofactor.

The enzyme catalyses (2R,3S)-3-isopropylmalate = (2S)-2-isopropylmalate. The protein operates within amino-acid biosynthesis; L-leucine biosynthesis; L-leucine from 3-methyl-2-oxobutanoate: step 2/4. Its function is as follows. Catalyzes the isomerization between 2-isopropylmalate and 3-isopropylmalate, via the formation of 2-isopropylmaleate. The protein is 3-isopropylmalate dehydratase large subunit of Brucella anthropi (strain ATCC 49188 / DSM 6882 / CCUG 24695 / JCM 21032 / LMG 3331 / NBRC 15819 / NCTC 12168 / Alc 37) (Ochrobactrum anthropi).